The chain runs to 337 residues: S-adenosylmethionine:tRNA ribosyltransferase-isomerase (337 aa).

It belongs to the QueA family. As to quaternary structure, monomer.

The protein localises to the cytoplasm. It catalyses the reaction 7-aminomethyl-7-carbaguanosine(34) in tRNA + S-adenosyl-L-methionine = epoxyqueuosine(34) in tRNA + adenine + L-methionine + 2 H(+). Its pathway is tRNA modification; tRNA-queuosine biosynthesis. Functionally, transfers and isomerizes the ribose moiety from AdoMet to the 7-aminomethyl group of 7-deazaguanine (preQ1-tRNA) to give epoxyqueuosine (oQ-tRNA). The sequence is that of S-adenosylmethionine:tRNA ribosyltransferase-isomerase from Legionella pneumophila subsp. pneumophila (strain Philadelphia 1 / ATCC 33152 / DSM 7513).